An 84-amino-acid polypeptide reads, in one-letter code: Small ribosomal subunit protein uS17 (84 aa).

The protein belongs to the universal ribosomal protein uS17 family. As to quaternary structure, part of the 30S ribosomal subunit.

One of the primary rRNA binding proteins, it binds specifically to the 5'-end of 16S ribosomal RNA. The polypeptide is Small ribosomal subunit protein uS17 (Photorhabdus laumondii subsp. laumondii (strain DSM 15139 / CIP 105565 / TT01) (Photorhabdus luminescens subsp. laumondii)).